The primary structure comprises 159 residues: Cytochrome P450 monooxygenase aunB (159 aa).

C134 provides a ligand contact to heme.

The protein belongs to the cytochrome P450 family. Heme is required as a cofactor.

The catalysed reaction is 2 fonsecin B + NADPH + O2 + H(+) = aurasperone B + NADP(+) + 2 H2O. The enzyme catalyses 2 rubrofusarin B + NADPH + O2 + H(+) = aurasperone A + NADP(+) + 2 H2O. It participates in secondary metabolite biosynthesis. Cytochrome P450 monooxygenase; part of the gene cluster that mediates the biosynthesis of aurasperone B, a dimeric gamma-naphthopyrone. The first step in the biosynthesis of aurasperone B is the production of gamma-naphthopyrone precursor YWA1 by the non-reducing polyketide synthase albA, via condensation of one acetyl-CoA starter unit with 6 malonyl-CoA units. YWA1 is then methylated by aunE at position C-6 to yield foncesin which is further methylated at position C-8 by aunD to produce fonsecin B. A key enzyme in the biosynthetic pathway is the cytochrome P450 monooxygenase aunB which catalyzes the oxidative dimerization of fonsecin B to aurasperone B. AunB also catalyzes the oxidative dimerization of rubrofusarin B into aurasperone A. In Aspergillus niger (strain ATCC 1015 / CBS 113.46 / FGSC A1144 / LSHB Ac4 / NCTC 3858a / NRRL 328 / USDA 3528.7), this protein is Cytochrome P450 monooxygenase aunB.